An 82-amino-acid polypeptide reads, in one-letter code: Protein RALF-like 8 (82 aa).

Residues 1–28 form the signal peptide; the sequence is MGMSKSIKVILSLALVVFLALAGTKVEA. Cystine bridges form between C47–C55 and C67–C73.

It belongs to the plant rapid alkalinization factor (RALF) family. As to expression, expressed in leaves and flowers.

It is found in the secreted. Cell signaling peptide that may regulate plant stress, growth, and development. Mediates a rapid alkalinization of extracellular space by mediating a transient increase in the cytoplasmic Ca(2+) concentration leading to a calcium-dependent signaling events through a cell surface receptor and a concomitant activation of some intracellular mitogen-activated protein kinases. This chain is Protein RALF-like 8 (RALFL8), found in Arabidopsis thaliana (Mouse-ear cress).